Consider the following 240-residue polypeptide: Large ribosomal subunit protein uL2 (240 aa).

Residues Met1 to Gly11 show a composition bias toward polar residues. 2 disordered regions span residues Met1–Val28 and Gly206–Lys240. Basic residues-rich tracts occupy residues Gly13–Val28 and Ser224–Lys240.

The protein belongs to the universal ribosomal protein uL2 family. As to quaternary structure, part of the 50S ribosomal subunit. Forms a bridge to the 30S subunit in the 70S ribosome.

In terms of biological role, one of the primary rRNA binding proteins. Required for association of the 30S and 50S subunits to form the 70S ribosome, for tRNA binding and peptide bond formation. It has been suggested to have peptidyltransferase activity; this is somewhat controversial. Makes several contacts with the 16S rRNA in the 70S ribosome. In Methanococcus maripaludis (strain C5 / ATCC BAA-1333), this protein is Large ribosomal subunit protein uL2.